The following is a 369-amino-acid chain: Putative cyclin-F1-1 (369 aa).

Positions 328-350 (AQHHLESKPAGAAGVGINSSGDD) are disordered.

The protein belongs to the cyclin family. Cyclin F subfamily.

The polypeptide is Putative cyclin-F1-1 (CYCF1-1) (Oryza sativa subsp. japonica (Rice)).